The primary structure comprises 394 residues: General receptor for phosphoinositides 1-associated scaffold protein (394 aa).

A disordered region spans residues 1–51 (MTLRRLRKLQQKEEATAAPDLAGRAPDSEAARAAPTPSGPPAAAAPPGAPG). Positions 37–49 (PSGPPAAAAPPGA) are enriched in pro residues. At Thr-76 the chain carries Phosphothreonine. Ser-93 is modified (phosphoserine). In terms of domain architecture, PDZ spans 100-189 (VLTLEKGDNQ…VLRLETLYGT (90 aa)). Residues 180–257 (VLRLETLYGT…GAGLLPGSLP (78 aa)) form an interaction with PSCD3 region. At Tyr-236 the chain carries Phosphotyrosine. Position 269 is an omega-N-methylarginine (Arg-269). The disordered stretch occupies residues 293–318 (EPQALPPPPPPARAPGPGSAETPASV). Positions 296–306 (ALPPPPPPARA) are enriched in pro residues. Phosphoserine is present on Ser-386.

Heteromer. Composed of TAMALIN, CYTH2 and at least one GRM1. Also interacts with CYTH3, GRM2, GRM3 and GRM5. Expressed in brain.

It is found in the cytoplasm. Its subcellular location is the perinuclear region. The protein localises to the cell membrane. The protein resides in the postsynaptic cell membrane. Functionally, plays a role in intracellular trafficking and contributes to the macromolecular organization of group 1 metabotropic glutamate receptors (mGluRs) at synapses. The sequence is that of General receptor for phosphoinositides 1-associated scaffold protein from Rattus norvegicus (Rat).